The primary structure comprises 140 residues: FlaA locus uncharacterized protein YlxG (140 aa).

The disordered stretch occupies residues 1 to 21 (MTSISSEYKLPEKTNTVSTNN).

It belongs to the FlgD family.

This chain is FlaA locus uncharacterized protein YlxG (ylxG), found in Bacillus subtilis (strain 168).